The primary structure comprises 169 residues: Mu-like prophage FluMu host-nuclease inhibitor protein gam (169 aa).

To phage Mu protein gam.

In terms of biological role, protects linear double-stranded DNA of Mu genome from exonuclease degradation. This Haemophilus influenzae (strain ATCC 51907 / DSM 11121 / KW20 / Rd) protein is Mu-like prophage FluMu host-nuclease inhibitor protein gam.